Here is a 602-residue protein sequence, read N- to C-terminus: Zinc finger protein 652-B (602 aa).

A disordered region spans residues 60–232 (FQDSKPTNEV…PSDKAKSEEK (173 aa)). The segment covering 65 to 79 (PTNEVHAVKGERENS) has biased composition (basic and acidic residues). 2 stretches are compositionally biased toward acidic residues: residues 80 to 108 (GESEEEEDEDDDDDDDDDDDDEEGEDEDE) and 148 to 167 (DDEGGDSGEDDQDSHEDEEN). A compositionally biased stretch (basic and acidic residues) spans 222–232 (SPSDKAKSEEK). A C2H2-type 1 zinc finger spans residues 235–258 (LTCDKCPRVFNTRWYLEKHMNVTH). A C2H2-type 2; degenerate zinc finger spans residues 262–284 (QICDKCGKKFVLESELSLHLQTD). 6 consecutive C2H2-type zinc fingers follow at residues 289–312 (IQCITCNKTFKKLWSLHEHIKIVH), 319–341 (FSCEICEKKFYTMAHVRKHLVAH), 347–369 (FTCETCGKSFKRSMSLKVHSLQH), 375–397 (FRCENCDERFQYKYQLRSHMSIH), 403–425 (FMCQWCGKDFNMKQYFDEHMKTH), and 431–453 (FICEICGKSFTSRPNMKRHRRTH). Residues 459–482 (YPCDVCGMRFRFSNMLKAHKEKCF) form a C2H2-type 9; degenerate zinc finger. Residues 543 to 575 (PFSHLHLHPHSHTHHLAVPPVPHLPPPPALFKS) are disordered. Positions 545 to 557 (SHLHLHPHSHTHH) are enriched in basic residues. The span at 561-571 (PPVPHLPPPPA) shows a compositional bias: pro residues.

It belongs to the krueppel C2H2-type zinc-finger protein family.

Its subcellular location is the nucleus. May be involved in transcriptional regulation. This Xenopus laevis (African clawed frog) protein is Zinc finger protein 652-B (znf652-b).